Reading from the N-terminus, the 280-residue chain is L-proline cis-4-hydroxylase (280 aa).

3 residues coordinate Fe cation: His106, Asp108, and His154. Residue Arg164 participates in 2-oxoglutarate binding.

The protein belongs to the L-proline cis-4-/cis-3-hydroxylase family. It depends on Fe(2+) as a cofactor.

It catalyses the reaction L-proline + 2-oxoglutarate + O2 = cis-4-hydroxy-L-proline + succinate + CO2. Inhibited by metal ions such as Co(2+), Zn(2+), Cu(2+) or Ni(2+). Is also inhibited by EDTA or diethylpyrocarbonate (DEPC) in vitro. Unlike the procollagen-proline cis-3- and trans-4-hydroxylases from mammals, does not necessarily require L-ascorbate for activity although it does increase the activity of the enzyme. Dioxygenase that catalyzes the 2-oxoglutarate-dependent selective hydroxylation of free L-proline to cis-4-hydroxy-L-proline (cis-4-Hyp). The polypeptide is L-proline cis-4-hydroxylase (Mesorhizobium japonicum (strain LMG 29417 / CECT 9101 / MAFF 303099) (Mesorhizobium loti (strain MAFF 303099))).